The sequence spans 99 residues: Large ribosomal subunit protein uL23 (99 aa).

It belongs to the universal ribosomal protein uL23 family. Part of the 50S ribosomal subunit. Contacts protein L29, and trigger factor when it is bound to the ribosome.

In terms of biological role, one of the early assembly proteins it binds 23S rRNA. One of the proteins that surrounds the polypeptide exit tunnel on the outside of the ribosome. Forms the main docking site for trigger factor binding to the ribosome. The sequence is that of Large ribosomal subunit protein uL23 from Oenococcus oeni (strain ATCC BAA-331 / PSU-1).